Reading from the N-terminus, the 275-residue chain is Glutamate 5-kinase (275 aa).

Lys-17 provides a ligand contact to ATP. Substrate-binding residues include Ser-57, Asp-144, and Asn-160. Residues 180 to 181 and 222 to 228 contribute to the ATP site; these read SD and TGGMLSK.

The protein belongs to the glutamate 5-kinase family.

It localises to the cytoplasm. It carries out the reaction L-glutamate + ATP = L-glutamyl 5-phosphate + ADP. Its pathway is amino-acid biosynthesis; L-proline biosynthesis; L-glutamate 5-semialdehyde from L-glutamate: step 1/2. Its function is as follows. Catalyzes the transfer of a phosphate group to glutamate to form L-glutamate 5-phosphate. This Streptococcus pyogenes serotype M12 (strain MGAS2096) protein is Glutamate 5-kinase.